Reading from the N-terminus, the 140-residue chain is 3-hydroxyacyl-[acyl-carrier-protein] dehydratase FabZ (140 aa).

Residue His-47 is part of the active site.

This sequence belongs to the thioester dehydratase family. FabZ subfamily.

It localises to the cytoplasm. The enzyme catalyses a (3R)-hydroxyacyl-[ACP] = a (2E)-enoyl-[ACP] + H2O. In terms of biological role, involved in unsaturated fatty acids biosynthesis. Catalyzes the dehydration of short chain beta-hydroxyacyl-ACPs and long chain saturated and unsaturated beta-hydroxyacyl-ACPs. This is 3-hydroxyacyl-[acyl-carrier-protein] dehydratase FabZ from Streptococcus suis (strain 98HAH33).